The sequence spans 223 residues: MTGDRELQALLRLTAWLSPAFPVGSFAYSGGLERAVADGLVTDAVSLAAWIGTLIGYGSVWNDAVLLAESHRWQAEPARLFEIAALAEALAGSRERHQETMLLGDAFLTAARAWPDGVFERLPDKAAYPVAVGAVTGAHGIGPEKALAVFLHAYASQAVSSGIRLGVTGQRDGVAVLAGLEECITEVARRAAASTLDDLGSATVQADIAGLRHETQATRLFRS.

This sequence belongs to the UreF family. As to quaternary structure, ureD, UreF and UreG form a complex that acts as a GTP-hydrolysis-dependent molecular chaperone, activating the urease apoprotein by helping to assemble the nickel containing metallocenter of UreC. The UreE protein probably delivers the nickel.

It is found in the cytoplasm. In terms of biological role, required for maturation of urease via the functional incorporation of the urease nickel metallocenter. This is Urease accessory protein UreF from Rhizobium leguminosarum bv. trifolii (strain WSM2304).